The sequence spans 328 residues: Testis-specific serine/threonine-protein kinase 4 (328 aa).

In terms of domain architecture, Protein kinase spans 25–293 (YEVGKAIGHG…ILDIIKDSWV (269 aa)). ATP-binding positions include 31-39 (IGHGSYGSV) and lysine 54. The active-site Proton acceptor is the aspartate 148. A Phosphothreonine modification is found at threonine 197.

The protein belongs to the protein kinase superfamily. CAMK Ser/Thr protein kinase family. Homodimer. Interacts with HSP90; this interaction stabilizes and activates TSSK4. Interacts with ODF2 (via C-terminus); this interaction promotes ODF2 phosphorylation on 'Ser-95'. May interact with CREM. Interacts with CREB1; this interaction facilitates phosphorylation on 'Ser-133'. Interacts with QRICH2. Mg(2+) is required as a cofactor. Activated by autophosphorylation on Thr-197. ODF2 potentiates the autophosphorylation activity of TSSK4 at Thr-197. In terms of processing, ubiquitinated; HSP90 activity negatively regulates ubiquitination and degradation. In terms of tissue distribution, expressed only in the testis.

It is found in the cytoplasmic vesicle. The protein localises to the secretory vesicle. It localises to the acrosome. Its subcellular location is the cell projection. The protein resides in the cilium. It is found in the flagellum. It carries out the reaction L-seryl-[protein] + ATP = O-phospho-L-seryl-[protein] + ADP + H(+). The enzyme catalyses L-threonyl-[protein] + ATP = O-phospho-L-threonyl-[protein] + ADP + H(+). Activated by phosphorylation on Thr-197. Its function is as follows. Serine/threonine kinase which is involved in male germ cell development and in mature sperm function. May be involved in the Cre/Creb signaling pathway. Phosphorylates CREB1 on 'Ser-133' in vitro and can stimulate Cre/Creb pathway in cells. Phosphorylates CREM on 'Ser-116' in vitro. Phosphorylates ODF2 on 'Ser-95'. The sequence is that of Testis-specific serine/threonine-protein kinase 4 from Homo sapiens (Human).